The chain runs to 1466 residues: Helicase ARIP4 (1466 aa).

Disordered stretches follow at residues 1–137 (MSDE…ERRK) and 185–235 (DSSS…THVN). Residues 11-49 (PDLDPDVELEDEEEEEEEEEVAVEEHDRDDEEGLLDDTS) show a composition bias toward acidic residues. Residues 72-82 (TSTTSSQSEPS) show a composition bias toward low complexity. A compositionally biased stretch (basic residues) spans 99–114 (KKRAQKPSHMRRNIRK). Residues K114 and K126 each participate in a glycyl lysine isopeptide (Lys-Gly) (interchain with G-Cter in SUMO2) cross-link. Residues 191 to 200 (EDEKSSRDEV) show a composition bias toward basic and acidic residues. K271 is covalently cross-linked (Glycyl lysine isopeptide (Lys-Gly) (interchain with G-Cter in SUMO2)). The Helicase ATP-binding domain occupies 291–511 (RFKTSSGFGC…WCMVDFVRPD (221 aa)). 304–311 (HSMGLGKT) is an ATP binding site. Residues 462–465 (DEGH) carry the DEAH box motif. Positions 550–554 (LHSLL) match the LXXLL motif 1 motif. A disordered region spans residues 649-670 (SAGTSARCPPHGTKVKGEDSAL). Residues K664, K681, K758, K900, K1013, and K1017 each participate in a glycyl lysine isopeptide (Lys-Gly) (interchain with G-Cter in SUMO2) cross-link. The Helicase C-terminal domain maps to 727-895 (HLIEESVKLG…RVVDDLNPML (169 aa)). 2 disordered regions span residues 1026 to 1045 (QSTP…GVSS) and 1120 to 1170 (ATGK…VSPD). Over residues 1135–1154 (SGSQGPSLASTSNGRHSASS) the composition is skewed to polar residues. Phosphoserine occurs at positions 1168 and 1171. Disordered regions lie at residues 1184-1212 (VAAA…MDNS) and 1259-1281 (TPSV…APVQ). The residue at position 1259 (T1259) is a Phosphothreonine. Residues 1328-1332 (LSNLL) carry the LXXLL motif 2 motif. The segment at 1444–1466 (AEVGFSSNDDEDKDDDVIEVTGK) is disordered. Over residues 1451 to 1466 (NDDEDKDDDVIEVTGK) the composition is skewed to acidic residues.

This sequence belongs to the SNF2/RAD54 helicase family. Interacts with AR via its N-terminus. Interacts with DYRK1A. Binds DNA and mononucleosomes, but does not seem to form large multiprotein complexes. Post-translationally, sumoylated. In terms of tissue distribution, expressed at relatively low level, with highest expression in testis, liver and kidney. In brain, it is expressed in hippocampal and cerebellar neurons. In testis, it is present at high level in Sertoli cell nuclei. Also present in Leydig cell (at protein level).

It is found in the nucleus. The catalysed reaction is ATP + H2O = ADP + phosphate + H(+). With respect to regulation, enzyme activity is enhanced by dsDNA (double-stranded DNA) and ssDNA (single-stranded DNA). DNA helicase that modulates androgen receptor (AR)-dependent transactivation in a promoter-dependent manner. Not able to remodel mononucleosomes in vitro. Acts as an AR-coregulator in Sertoli cells. In Mus musculus (Mouse), this protein is Helicase ARIP4 (Rad54l2).